The chain runs to 224 residues: Urease accessory protein UreF (224 aa).

Belongs to the UreF family. UreD, UreF and UreG form a complex that acts as a GTP-hydrolysis-dependent molecular chaperone, activating the urease apoprotein by helping to assemble the nickel containing metallocenter of UreC. The UreE protein probably delivers the nickel.

Its subcellular location is the cytoplasm. Functionally, required for maturation of urease via the functional incorporation of the urease nickel metallocenter. This chain is Urease accessory protein UreF, found in Pseudomonas fluorescens (strain ATCC BAA-477 / NRRL B-23932 / Pf-5).